Here is a 286-residue protein sequence, read N- to C-terminus: Homoserine kinase (286 aa).

P78–S88 contributes to the ATP binding site.

This sequence belongs to the GHMP kinase family. Homoserine kinase subfamily.

Its subcellular location is the cytoplasm. It carries out the reaction L-homoserine + ATP = O-phospho-L-homoserine + ADP + H(+). Its pathway is amino-acid biosynthesis; L-threonine biosynthesis; L-threonine from L-aspartate: step 4/5. Its function is as follows. Catalyzes the ATP-dependent phosphorylation of L-homoserine to L-homoserine phosphate. This Streptococcus suis (strain 98HAH33) protein is Homoserine kinase.